We begin with the raw amino-acid sequence, 193 residues long: SCO1 protein homolog (193 aa).

An N-terminal signal peptide occupies residues 1–18; the sequence is MKVIKGLTAGLIFLFLCA. Cysteine 19 carries the N-palmitoyl cysteine lipid modification. Cysteine 19 carries the S-diacylglycerol cysteine lipid modification. The region spanning 26 to 191 is the Thioredoxin domain; the sequence is DPLNYEVEPF…IISDVKSAST (166 aa). Cu cation contacts are provided by cysteine 64, cysteine 68, and histidine 154.

This sequence belongs to the SCO1/2 family. In terms of assembly, monomer.

It is found in the cell membrane. Functionally, necessary for insertion of copper into the active site of cytochrome c oxidase. May play a role in copper homeostasis or redox signaling. This chain is SCO1 protein homolog (ypmQ), found in Bacillus subtilis (strain 168).